The sequence spans 161 residues: DNA-directed RNA polymerase 18 kDa subunit (161 aa).

This sequence belongs to the poxviridae DNA-directed RNA polymerase 18 kDa subunit family. As to quaternary structure, the DNA-dependent RNA polymerase used for intermediate and late genes expression consists of eight subunits Rpo30/OPG66, Rpo7/OPG90, Rpo22/OPG103, Rpo147/OPG105, Rpo18/OPG119, Rpo19/OPG131, Rpo132/OPG151 and Rpo35/OPG156. The same holoenzyme, with the addition of the transcription-specificity factor OPG109, is used for early gene expression.

The protein resides in the virion. It catalyses the reaction RNA(n) + a ribonucleoside 5'-triphosphate = RNA(n+1) + diphosphate. Part of the DNA-dependent RNA polymerase which catalyzes the transcription of viral DNA into RNA using the four ribonucleoside triphosphates as substrates. Responsible for the transcription of early, intermediate and late genes. DNA-dependent RNA polymerase associates with the early transcription factor (ETF), itself composed of OPG118 and OPG133, thereby allowing the early genes transcription. Late transcription, and probably also intermediate transcription, require newly synthesized RNA polymerase. The polypeptide is DNA-directed RNA polymerase 18 kDa subunit (OPG119) (Homo sapiens (Human)).